We begin with the raw amino-acid sequence, 652 residues long: DNA ligase (652 aa).

NAD(+)-binding positions include 29-33 (DSEYD), 78-79 (SL), and E107. K109 (N6-AMP-lysine intermediate) is an active-site residue. NAD(+)-binding residues include R130, E164, K278, and K302. C395, C398, C413, and C418 together coordinate Zn(2+). The BRCT domain occupies 577 to 652 (VADAALSGLT…VRDEAWLESL (76 aa)).

It belongs to the NAD-dependent DNA ligase family. LigA subfamily. Requires Mg(2+) as cofactor. It depends on Mn(2+) as a cofactor.

It carries out the reaction NAD(+) + (deoxyribonucleotide)n-3'-hydroxyl + 5'-phospho-(deoxyribonucleotide)m = (deoxyribonucleotide)n+m + AMP + beta-nicotinamide D-nucleotide.. Functionally, DNA ligase that catalyzes the formation of phosphodiester linkages between 5'-phosphoryl and 3'-hydroxyl groups in double-stranded DNA using NAD as a coenzyme and as the energy source for the reaction. It is essential for DNA replication and repair of damaged DNA. The sequence is that of DNA ligase from Streptococcus pneumoniae (strain 70585).